Here is a 235-residue protein sequence, read N- to C-terminus: Large ribosomal subunit protein uL1 (235 aa).

The protein belongs to the universal ribosomal protein uL1 family. In terms of assembly, part of the 50S ribosomal subunit.

In terms of biological role, binds directly to 23S rRNA. The L1 stalk is quite mobile in the ribosome, and is involved in E site tRNA release. Functionally, protein L1 is also a translational repressor protein, it controls the translation of the L11 operon by binding to its mRNA. This Micrococcus luteus (strain ATCC 4698 / DSM 20030 / JCM 1464 / CCM 169 / CCUG 5858 / IAM 1056 / NBRC 3333 / NCIMB 9278 / NCTC 2665 / VKM Ac-2230) (Micrococcus lysodeikticus) protein is Large ribosomal subunit protein uL1.